We begin with the raw amino-acid sequence, 620 residues long: EF-hand calcium-binding domain-containing protein 7 (620 aa).

The disordered stretch occupies residues Met-1–Gln-24. EF-hand domains are found at residues Ala-98–Lys-133 and Met-134–Gln-169. Positions Glu-176–Tyr-234 are disordered. A compositionally biased stretch (basic and acidic residues) spans Phe-213–Ser-225. The EF-hand 3 domain occupies Glu-394–Glu-429. Residues Asp-407, Asp-409, Asn-411, and Glu-418 each coordinate Ca(2+).

It localises to the cell projection. The protein localises to the cilium membrane. Functionally, plays a role in the ciliary Hedgehog (Hh) signaling. The polypeptide is EF-hand calcium-binding domain-containing protein 7 (efcab7) (Xenopus laevis (African clawed frog)).